The chain runs to 416 residues: Tyrosine--tRNA ligase (416 aa).

Position 40 (tyrosine 40) interacts with L-tyrosine. The 'HIGH' region motif lies at 45–54 (ATAASLHVGH). Tyrosine 177 and glutamine 181 together coordinate L-tyrosine. The 'KMSKS' region signature appears at 237 to 241 (KMGKS). ATP is bound at residue lysine 240. Residues 351-416 (LSVTHFLVAA…RKKHKLVRLA (66 aa)) form the S4 RNA-binding domain.

The protein belongs to the class-I aminoacyl-tRNA synthetase family. TyrS type 1 subfamily. As to quaternary structure, homodimer.

The protein resides in the cytoplasm. The catalysed reaction is tRNA(Tyr) + L-tyrosine + ATP = L-tyrosyl-tRNA(Tyr) + AMP + diphosphate + H(+). Catalyzes the attachment of tyrosine to tRNA(Tyr) in a two-step reaction: tyrosine is first activated by ATP to form Tyr-AMP and then transferred to the acceptor end of tRNA(Tyr). The polypeptide is Tyrosine--tRNA ligase (Cereibacter sphaeroides (strain ATCC 17025 / ATH 2.4.3) (Rhodobacter sphaeroides)).